Here is a 77-residue protein sequence, read N- to C-terminus: Cold shock protein YdfK (77 aa).

This sequence to E.coli YnaE.

The protein is Cold shock protein YdfK (ydfK) of Escherichia coli (strain K12).